A 97-amino-acid chain; its full sequence is MEISINYLLIVIALLFFVVAYFVGIKKQTWMLAGFNEARIRDKDRLARIAGYFFLNSGLFILLNSFISFQGQEQLIPPLILAYGAGVIIYVNKKLVE.

The next 3 membrane-spanning stretches (helical) occupy residues 5–25 (INYLLIVIALLFFVVAYFVGI), 49–71 (IAGYFFLNSGLFILLNSFISFQG), and 75–92 (LIPPLILAYGAGVIIYVN).

It localises to the cell membrane. This is an uncharacterized protein from Bacillus subtilis (strain 168).